The following is a 163-amino-acid chain: ATP synthase subunit b 1 (163 aa).

A helical membrane pass occupies residues 7–27; it reads AETWVAIAFVILMGIFAYLGV.

This sequence belongs to the ATPase B chain family. F-type ATPases have 2 components, F(1) - the catalytic core - and F(0) - the membrane proton channel. F(1) has five subunits: alpha(3), beta(3), gamma(1), delta(1), epsilon(1). F(0) has three main subunits: a(1), b(2) and c(10-14). The alpha and beta chains form an alternating ring which encloses part of the gamma chain. F(1) is attached to F(0) by a central stalk formed by the gamma and epsilon chains, while a peripheral stalk is formed by the delta and b chains.

The protein resides in the cell inner membrane. In terms of biological role, f(1)F(0) ATP synthase produces ATP from ADP in the presence of a proton or sodium gradient. F-type ATPases consist of two structural domains, F(1) containing the extramembraneous catalytic core and F(0) containing the membrane proton channel, linked together by a central stalk and a peripheral stalk. During catalysis, ATP synthesis in the catalytic domain of F(1) is coupled via a rotary mechanism of the central stalk subunits to proton translocation. Its function is as follows. Component of the F(0) channel, it forms part of the peripheral stalk, linking F(1) to F(0). This Rhodopseudomonas palustris (strain HaA2) protein is ATP synthase subunit b 1.